The chain runs to 156 residues: Small ribosomal subunit protein uS7 (156 aa).

It belongs to the universal ribosomal protein uS7 family. Part of the 30S ribosomal subunit. Contacts proteins S9 and S11.

One of the primary rRNA binding proteins, it binds directly to 16S rRNA where it nucleates assembly of the head domain of the 30S subunit. Is located at the subunit interface close to the decoding center, probably blocks exit of the E-site tRNA. The protein is Small ribosomal subunit protein uS7 of Staphylococcus aureus (strain USA300).